The chain runs to 37 residues: Large ribosomal subunit protein bL36c (37 aa).

It belongs to the bacterial ribosomal protein bL36 family.

It is found in the plastid. It localises to the cyanelle. This is Large ribosomal subunit protein bL36c (rpl36) from Cyanophora paradoxa.